Reading from the N-terminus, the 299-residue chain is Phosphoribosylaminoimidazole-succinocarboxamide synthase (299 aa).

The protein belongs to the SAICAR synthetase family.

It carries out the reaction 5-amino-1-(5-phospho-D-ribosyl)imidazole-4-carboxylate + L-aspartate + ATP = (2S)-2-[5-amino-1-(5-phospho-beta-D-ribosyl)imidazole-4-carboxamido]succinate + ADP + phosphate + 2 H(+). It participates in purine metabolism; IMP biosynthesis via de novo pathway; 5-amino-1-(5-phospho-D-ribosyl)imidazole-4-carboxamide from 5-amino-1-(5-phospho-D-ribosyl)imidazole-4-carboxylate: step 1/2. This chain is Phosphoribosylaminoimidazole-succinocarboxamide synthase, found in Leifsonia xyli subsp. xyli (strain CTCB07).